The following is an 80-amino-acid chain: Exodeoxyribonuclease 7 small subunit (80 aa).

Belongs to the XseB family. Heterooligomer composed of large and small subunits.

Its subcellular location is the cytoplasm. It catalyses the reaction Exonucleolytic cleavage in either 5'- to 3'- or 3'- to 5'-direction to yield nucleoside 5'-phosphates.. Bidirectionally degrades single-stranded DNA into large acid-insoluble oligonucleotides, which are then degraded further into small acid-soluble oligonucleotides. This is Exodeoxyribonuclease 7 small subunit from Aliivibrio salmonicida (strain LFI1238) (Vibrio salmonicida (strain LFI1238)).